Reading from the N-terminus, the 270-residue chain is Orotidine 5'-phosphate decarboxylase (270 aa).

Substrate-binding positions include D41, 63 to 65 (KTH), 95 to 104 (DRKFADIGNT), Y221, and R239. K97 acts as the Proton donor in catalysis.

It belongs to the OMP decarboxylase family.

The enzyme catalyses orotidine 5'-phosphate + H(+) = UMP + CO2. It participates in pyrimidine metabolism; UMP biosynthesis via de novo pathway; UMP from orotate: step 2/2. The polypeptide is Orotidine 5'-phosphate decarboxylase (URA3) (Candida boidinii (Yeast)).